The chain runs to 232 residues: MTNADPHELQKFSDLAHKWWDPNAEFKPLHDLNPVRLSWIDAHAHLPGKRVVDIGCGGGILSESMASLGAQVKGIDLATEALGVADLHSLESGVSVDYEAIAAEALAAREPGAYDVVTCMEMLEHVPSPANIVAACATLVKPGGWVFFSTLNRNLKSYLLAVIGAEYIAQMLPKGTHDYARFIRPSELARFVREAGLQMVEIKGIAYHPLAKRFALSNDTDVNYLVACRRGA.

S-adenosyl-L-methionine is bound by residues Arg-36, Gly-55, Asp-76, and Met-120.

Belongs to the methyltransferase superfamily. UbiG/COQ3 family.

The enzyme catalyses a 3-demethylubiquinol + S-adenosyl-L-methionine = a ubiquinol + S-adenosyl-L-homocysteine + H(+). It carries out the reaction a 3-(all-trans-polyprenyl)benzene-1,2-diol + S-adenosyl-L-methionine = a 2-methoxy-6-(all-trans-polyprenyl)phenol + S-adenosyl-L-homocysteine + H(+). It participates in cofactor biosynthesis; ubiquinone biosynthesis. In terms of biological role, O-methyltransferase that catalyzes the 2 O-methylation steps in the ubiquinone biosynthetic pathway. The protein is Ubiquinone biosynthesis O-methyltransferase of Burkholderia mallei (strain ATCC 23344).